A 223-amino-acid chain; its full sequence is uncharacterized protein (223 aa).

The interval 117 to 148 (THAHTHAHTHGHTHTRAHSTHAHTHAHSHYHT) is disordered.

This is an uncharacterized protein from Homo sapiens (Human).